The sequence spans 178 residues: Mediator of RNA polymerase II transcription subunit 21 (178 aa).

The interval 36–91 is disordered; sequence DDDDVNSYSNMAANAPLPQSQQQRQQQKKQQEPQQEIEQPQQQSNPESKSISPPKE. A compositionally biased stretch (low complexity) spans 67–85; it reads EPQQEIEQPQQQSNPESKS. Residues 128-169 adopt a coiled-coil conformation; the sequence is NEQMNLINELSDKLQAIEEERIQKIKEKDNLLNLLESMIKEV.

It belongs to the Mediator complex subunit 21 family. Component of the Mediator complex.

The protein resides in the nucleus. Its function is as follows. Component of the Mediator complex, a coactivator involved in the regulated transcription of nearly all RNA polymerase II-dependent genes. Mediator functions as a bridge to convey information from gene-specific regulatory proteins to the basal RNA polymerase II transcription machinery. Mediator is recruited to promoters by direct interactions with regulatory proteins and serves as a scaffold for the assembly of a functional preinitiation complex with RNA polymerase II and the general transcription factors. The protein is Mediator of RNA polymerase II transcription subunit 21 (SRB7) of Candida albicans (strain SC5314 / ATCC MYA-2876) (Yeast).